A 240-amino-acid chain; its full sequence is Guanylate kinase (240 aa).

Positions 56–236 (GRIFVITGPS…TLNELKSILL (181 aa)) constitute a Guanylate kinase-like domain. 63–70 (GPSGVGKS) contributes to the ATP binding site.

Belongs to the guanylate kinase family.

It is found in the cytoplasm. The enzyme catalyses GMP + ATP = GDP + ADP. Essential for recycling GMP and indirectly, cGMP. The polypeptide is Guanylate kinase (gmk) (Mycoplasma genitalium (strain ATCC 33530 / DSM 19775 / NCTC 10195 / G37) (Mycoplasmoides genitalium)).